Consider the following 159-residue polypeptide: Transcription elongation factor GreA (159 aa).

The stretch at 5 to 77 (REVVLTAQGL…LETMLRKAVI (73 aa)) forms a coiled coil.

The protein belongs to the GreA/GreB family.

Its function is as follows. Necessary for efficient RNA polymerase transcription elongation past template-encoded arresting sites. The arresting sites in DNA have the property of trapping a certain fraction of elongating RNA polymerases that pass through, resulting in locked ternary complexes. Cleavage of the nascent transcript by cleavage factors such as GreA or GreB allows the resumption of elongation from the new 3'terminus. GreA releases sequences of 2 to 3 nucleotides. This is Transcription elongation factor GreA from Alkaliphilus oremlandii (strain OhILAs) (Clostridium oremlandii (strain OhILAs)).